The primary structure comprises 344 residues: L-rhamnose-proton symporter (344 aa).

The next 10 helical transmembrane spans lie at 4–24 (AITM…CFYA), 38–58 (WSVG…ALLL), 68–88 (FSLS…IGNI), 101–121 (MGIG…TPII), 137–157 (TLLG…AGQL), 175–195 (LVLA…MNAA), 214–234 (LPSY…FCFI), 259–279 (VLLS…YAWG), 290–310 (ISWM…GLVL), and 323–343 (VLSL…IGMA).

This sequence belongs to the L-rhamnose transporter (TC 2.A.7.6) family.

The protein localises to the cell inner membrane. The catalysed reaction is L-rhamnopyranose(in) + H(+)(in) = L-rhamnopyranose(out) + H(+)(out). Functionally, uptake of L-rhamnose across the cytoplasmic membrane with the concomitant transport of protons into the cell (symport system). This is L-rhamnose-proton symporter from Escherichia coli (strain ATCC 8739 / DSM 1576 / NBRC 3972 / NCIMB 8545 / WDCM 00012 / Crooks).